The chain runs to 76 residues: Glutathione S-transferase (76 aa).

In terms of domain architecture, GST N-terminal spans 1 to 40 (XVAFETVPVDLMKGEHKQPAYLALQPFGTVPAVVDGDYXL). Positions 41 to 76 (LSAVLDVYEAHLHGYLAGDFVSLADLAHLPFTDYLV) constitute a GST C-terminal domain.

This sequence belongs to the GST superfamily. Theta family.

It localises to the cytoplasm. The catalysed reaction is RX + glutathione = an S-substituted glutathione + a halide anion + H(+). Conjugation of reduced glutathione to a wide number of exogenous and endogenous hydrophobic electrophiles. In Brassica oleracea var. italica (Broccoli), this protein is Glutathione S-transferase.